A 218-amino-acid chain; its full sequence is NADH dehydrogenase [ubiquinone] iron-sulfur protein 7, mitochondrial (218 aa).

Over residues 34 to 48 (LPALSPSTSPTSYTR) the composition is skewed to low complexity. The tract at residues 34 to 61 (LPALSPSTSPTSYTRPGPPSTSPPPPGL) is disordered. Pro residues predominate over residues 49–60 (PGPPSTSPPPPG). Cysteine 93, cysteine 94, cysteine 158, and cysteine 188 together coordinate [4Fe-4S] cluster.

This sequence belongs to the complex I 20 kDa subunit family. Complex I is composed of at least 49 different subunits. This is a component of the iron-sulfur (IP) fragment of the enzyme. [4Fe-4S] cluster serves as cofactor.

It localises to the mitochondrion. It carries out the reaction a ubiquinone + NADH + 5 H(+)(in) = a ubiquinol + NAD(+) + 4 H(+)(out). Core subunit of the mitochondrial membrane respiratory chain NADH dehydrogenase (Complex I) that is believed to belong to the minimal assembly required for catalysis. Complex I functions in the transfer of electrons from NADH to the respiratory chain. The immediate electron acceptor for the enzyme is believed to be ubiquinone. The chain is NADH dehydrogenase [ubiquinone] iron-sulfur protein 7, mitochondrial from Arabidopsis thaliana (Mouse-ear cress).